Consider the following 142-residue polypeptide: MSQKLYILAKGIGRRKEAVAQVQLLAGSGQFIINGLPANLYLQEDPRSILAIDAPFKQLHVDHSADKDSLQTLDTIVKVQGGGKIGQANAIKLGVARALCEFNGEYRKSLKDSGFLTQDSRIKERRKYGLKKARKAPQYHKR.

Belongs to the universal ribosomal protein uS9 family.

The protein resides in the plastid. It localises to the chloroplast. The polypeptide is Small ribosomal subunit protein uS9c (rps9) (Stigeoclonium helveticum (Green alga)).